We begin with the raw amino-acid sequence, 230 residues long: Protein LURP-one-related 11 (230 aa).

This sequence belongs to the LOR family.

Its function is as follows. Might be related to the phospholipid scramblase and tubby-like superfamily of membrane tethered transcription factors. The protein is Protein LURP-one-related 11 of Arabidopsis thaliana (Mouse-ear cress).